We begin with the raw amino-acid sequence, 1288 residues long: SH3 domain and tetratricopeptide repeat-containing protein 2 (1288 aa).

2 consecutive SH3 domains span residues 176–240 (EGHF…PLPL) and 268–331 (IGRG…PDSY). Positions 386–395 (NPPNDLSASQ) are enriched in polar residues. Disordered regions lie at residues 386–405 (NPPNDLSASQPEGFKEVRPG) and 410–444 (EHQAVGSRQSSSSEDSSLEEELLSATSDSYRLPEP). TPR repeat units lie at residues 528–561 (ARLCFLLGRLSIRKVKLSQARVYFEEAIHILNGA), 757–790 (RALCLILSKVYLEHRSPDGAIHYLSQALVLGQLL), 836–869 (GVIYNLLGLALQGEGRVNRAAKSYLRALNRAQEV), 1001–1037 (GRLLESLGQLYRNLNTARSLRRSLTCIKESLRIFIDL), 1084–1118 (LKLYEEAGDVFFNGTRHRHHAVEYYRAGAVPLARR), 1119–1152 (LKAVRTELRIFNKLTELQISLEGYEKALEFATLA), 1166–1199 (LVAFHRLATVYYSLHMYEMAEDCYLKTLSLCPPW), and 1210–1244 (AKVYYRLGRLTFCQLKDAHDATEYFLLALAAAVLL).

In terms of tissue distribution, strongly expressed in brain and spinal cord. Expressed at equal level in spinal cord and sciatic nerve. Weakly expressed in striated muscle.

The protein is SH3 domain and tetratricopeptide repeat-containing protein 2 (SH3TC2) of Homo sapiens (Human).